The following is a 492-amino-acid chain: Spore germination protein XA (492 aa).

Transmembrane regions (helical) follow at residues 246-266 (FILL…FPFF), 285-305 (LLSL…VALV), 325-345 (EGIP…FELL), 353-373 (PAAF…QAAI), 377-397 (FVSP…FTLV), 413-433 (FLMS…LIVI), and 442-462 (GLPF…PSTF).

It belongs to the GerABKA family.

It localises to the cell membrane. May allow B.anthracis to germinate within phagocytic cells and therefore involved in virulence. This Bacillus anthracis protein is Spore germination protein XA (gerXA).